Here is a 641-residue protein sequence, read N- to C-terminus: Chaperone protein HtpG (641 aa).

Residues 1–348 are a; substrate-binding; sequence MTTATEKQTL…SNDLSLNVSR (348 aa). The b stretch occupies residues 349–565; it reads EILQNDKAVE…AYDMGVQMRR (217 aa). A c region spans residues 566-641; sequence IMEAAGQALP…KLLLELSNAG (76 aa).

The protein belongs to the heat shock protein 90 family. In terms of assembly, homodimer.

Its subcellular location is the cytoplasm. In terms of biological role, molecular chaperone. Has ATPase activity. This chain is Chaperone protein HtpG, found in Hahella chejuensis (strain KCTC 2396).